The following is a 426-amino-acid chain: Probable inactive metalloprotease YmfF (426 aa).

The Zn(2+) site is built by His-50 and Glu-138.

This sequence belongs to the peptidase M16 family.

This is Probable inactive metalloprotease YmfF (ymfF) from Bacillus subtilis (strain 168).